We begin with the raw amino-acid sequence, 1464 residues long: ABC transporter G family member 35 (1464 aa).

The tract at residues 1–26 (MDAAAEMQKVVSLRRGGGGSSSRGAA) is disordered. The region spanning 173–446 (ANALGILPNK…FELMGFKCPE (274 aa)) is the ABC transporter 1 domain. Position 206–213 (206–213 (GPPGSGKT)) interacts with ATP. The region spanning 524–737 (ELLKANIDRE…AQNAISVNEF (214 aa)) is the ABC transmembrane type-2 1 domain. The next 7 membrane-spanning stretches (helical) occupy residues 542–562 (FVYI…MTVF), 575–595 (GVIF…NGLS), 630–650 (IPMS…VIGF), 662–682 (LLML…GGAA), 686–706 (IVAN…GGFI), 715–735 (WWIW…ISVN), and 774–794 (IGFG…TLAL). The ABC transporter 2 domain occupies 867–1119 (LTFDNIKYSV…ELIKYFEGIK (253 aa)). Position 912–919 (912–919 (GVSGAGKT)) interacts with ATP. The ABC transmembrane type-2 2 domain occupies 1192–1406 (NQCLACLWKM…TLYGLVASQF (215 aa)). A run of 7 helical transmembrane segments spans residues 1213–1233 (AIRL…FWDL), 1243–1263 (LFNA…LNSQ), 1299–1319 (FPYT…MIGF), 1326–1346 (FFWY…YGMM), 1356–1376 (VASI…GFII), 1387–1407 (WYCW…SQFG), and 1436–1456 (VVAV…GFAI).

It belongs to the ABC transporter superfamily. ABCG family. PDR (TC 3.A.1.205) subfamily.

Its subcellular location is the membrane. Functionally, may be a general defense protein. In Oryza sativa subsp. japonica (Rice), this protein is ABC transporter G family member 35.